A 1238-amino-acid chain; its full sequence is DNA-directed RNA polymerase subunit beta (1238 aa).

Residues 1187–1238 (EGREDTPPEEVYEESYEEGFEEEIEELPEDIDFEPDSFDIENDDLDLEDFDI) are disordered. Acidic residues predominate over residues 1193–1238 (PPEEVYEESYEEGFEEEIEELPEDIDFEPDSFDIENDDLDLEDFDI).

The protein belongs to the RNA polymerase beta chain family. As to quaternary structure, the RNAP catalytic core consists of 2 alpha, 1 beta, 1 beta' and 1 omega subunit. When a sigma factor is associated with the core the holoenzyme is formed, which can initiate transcription.

It catalyses the reaction RNA(n) + a ribonucleoside 5'-triphosphate = RNA(n+1) + diphosphate. In terms of biological role, DNA-dependent RNA polymerase catalyzes the transcription of DNA into RNA using the four ribonucleoside triphosphates as substrates. The polypeptide is DNA-directed RNA polymerase subunit beta (Thermoanaerobacter pseudethanolicus (strain ATCC 33223 / 39E) (Clostridium thermohydrosulfuricum)).